Consider the following 535-residue polypeptide: Dynein axonemal assembly factor 8 (535 aa).

5 disordered regions span residues Ala-112–Arg-215, Arg-228–Pro-267, Pro-344–Arg-380, Thr-395–Cys-444, and Ile-461–Leu-535. The span at Arg-125 to Arg-139 shows a compositional bias: basic and acidic residues. Residues Gly-166–Ser-175 show a composition bias toward polar residues. The residue at position 175 (Ser-175) is a Phosphoserine. Residue Ser-362 is modified to Phosphoserine. The span at Asp-415–Glu-424 shows a compositional bias: acidic residues. Residues Ser-435 to Cys-444 show a composition bias toward polar residues.

It localises to the dynein axonemal particle. The protein localises to the cytoplasm. Functionally, in cyliated cells, dynein axonemal particle-specific protein required for deployment of ODA to the axoneme. Interacts with outer dynein arm (ODA) subunits. This Macaca fascicularis (Crab-eating macaque) protein is Dynein axonemal assembly factor 8 (DNAAF8).